We begin with the raw amino-acid sequence, 305 residues long: MNEYLVSRRRLLRLSLSLLPLGLGRPALAQSLFMPQRVITLFQGATDTAVALGITPAGVVDSWSEKPMYRYLRQALAGVPHVGLETQPSLEDIVLLKPDAIVASRFRHQRLEPLLSQIAPVVMLDEIYQFKKTVQVMGQALQRQAVADQLLQNWQLRVNGLREQLQRKFGGDWPPTVSILDIREDHIRSYLPGSFPGSVLSELGFGWSDASRAQPGVSLKLTNKESIPVVDADIFFIFLRSESPSVQRNYESLIRHPLWQQLRAPRRNQVWVVNGVTWSLSGGILGANMMLDDIARVTGIAGGVS.

The N-terminal stretch at 1-29 (MNEYLVSRRRLLRLSLSLLPLGLGRPALA) is a signal peptide. Positions 37 to 302 (RVITLFQGAT…DIARVTGIAG (266 aa)) constitute a Fe/B12 periplasmic-binding domain.

This sequence belongs to the bacterial solute-binding protein 8 family.

The protein resides in the periplasm. Its function is as follows. Binds citrate- or chloride-dependent Fe(3+); part of the binding-protein-dependent transport system CbrABCD for uptake of the siderophore achromobactin. This is Achromobactin-binding periplasmic protein (cbrA) from Dickeya dadantii (strain 3937) (Erwinia chrysanthemi (strain 3937)).